The chain runs to 276 residues: Probable ABC transporter permease protein NosY (276 aa).

A run of 6 helical transmembrane segments spans residues 20-40 (WLLA…WLGA), 55-75 (IASL…LLAY), 111-131 (ILAL…ALLV), 146-166 (FMIS…VLSG), 179-199 (LGVW…LLVL), and 251-271 (VLWL…YAIF).

The complex may be composed of an ATP-binding protein (NosF), a transmembrane protein (NosY) and a solute-binding protein (NosD).

It is found in the cell inner membrane. Its function is as follows. Required for the assembly of the copper chromophores of nitrous oxide reductase. Could be part of the ABC transporter complex NosDFY. The polypeptide is Probable ABC transporter permease protein NosY (Stutzerimonas stutzeri (Pseudomonas stutzeri)).